We begin with the raw amino-acid sequence, 224 residues long: MPFLFVSGTGTGVGKTFSTAVLVRYLADQGHDVLPVKLVQTGELPGEGDIFNIERLTGIAGEEFARFKDPLAPNLAARREGVEPIQFDQIISWLRGFDDPDRIIVVEGAGGLLVRLGEDFTLADVASALNAPLVIVTSTGLGSLNAAELSVEAANRRGLTVLGVLGGSIPQNPDLATMLNLEEFERVTGVPFWGALPEGLSRVEGFVEKQSFPALDAFKKPPAR.

12–17 (GVGKTF) lines the ATP pocket. Residue Thr16 participates in Mg(2+) binding. Lys37 is an active-site residue. Thr41 contacts substrate. Residues Asn52, 107-110 (EGAG), 167-168 (GS), 197-199 (PEG), and Glu204 each bind ATP. The Mg(2+) site is built by Asn52 and Glu107.

It belongs to the dethiobiotin synthetase family. As to quaternary structure, homodimer. Mg(2+) is required as a cofactor.

The protein resides in the cytoplasm. It carries out the reaction (7R,8S)-7,8-diammoniononanoate + CO2 + ATP = (4R,5S)-dethiobiotin + ADP + phosphate + 3 H(+). It participates in cofactor biosynthesis; biotin biosynthesis; biotin from 7,8-diaminononanoate: step 1/2. Catalyzes a mechanistically unusual reaction, the ATP-dependent insertion of CO2 between the N7 and N8 nitrogen atoms of 7,8-diaminopelargonic acid (DAPA, also called 7,8-diammoniononanoate) to form a ureido ring. In Corynebacterium glutamicum (strain ATCC 13032 / DSM 20300 / JCM 1318 / BCRC 11384 / CCUG 27702 / LMG 3730 / NBRC 12168 / NCIMB 10025 / NRRL B-2784 / 534), this protein is ATP-dependent dethiobiotin synthetase BioD.